The sequence spans 136 residues: Small ribosomal subunit protein uS19 (136 aa).

It belongs to the universal ribosomal protein uS19 family.

Functionally, protein S19 forms a complex with S13 that binds strongly to the 16S ribosomal RNA. This is Small ribosomal subunit protein uS19 from Methanothrix thermoacetophila (strain DSM 6194 / JCM 14653 / NBRC 101360 / PT) (Methanosaeta thermophila).